The chain runs to 1226 residues: Chitin synthase IV (1226 aa).

The disordered stretch occupies residues 1 to 205 (MSLPERPGGS…SRKNPATAEQ (205 aa)). Over residues 49–65 (SVSSYAETISNPHANTE) the composition is skewed to polar residues. Positions 66–75 (TLPLSPTHPT) are enriched in low complexity. Residues 94-107 (IRPERNRIDKDHRN) are compositionally biased toward basic and acidic residues. Polar residues predominate over residues 134–151 (DVSTEPSGGSQTHGSFAD). The segment covering 163-172 (MSGDDQEKGN) has biased composition (basic and acidic residues). Basic residues predominate over residues 173 to 198 (TRVKSRPRRSKSGKITKETRHRKSRK). Residues 246-266 (MGLISIILVIMAIVGFLTFGF) form a helical membrane-spanning segment. Residues Asn381, Asn421, and Asn443 are each glycosylated (N-linked (GlcNAc...) asparagine). Residues 516-536 (ILILSVVGTRFVLALIFQWFI) form a helical membrane-spanning segment. The tract at residues 572–671 (LPGDVGSSAM…PGPAGFIHDS (100 aa)) is disordered. 2 stretches are compositionally biased toward polar residues: residues 580-601 (AMGSSDRTSKRGSSFLPTTSRF) and 618-643 (TTMSSQGPASALLNPNSIYRQGNDSR). An N-linked (GlcNAc...) asparagine glycan is attached at Asn640. The span at 649–666 (PDPYSSAASPSDGPGPAG) shows a compositional bias: low complexity. N-linked (GlcNAc...) asparagine glycans are attached at residues Asn787 and Asn1035. The next 3 membrane-spanning stretches (helical) occupy residues 1060–1080 (FVVFVELVGTLVLPAAIAFTF), 1094–1114 (IIPLVLLALILGLPGLLILVT), and 1118–1138 (WSYVVWMLIYLVSLPIWNFVL).

The protein belongs to the chitin synthase family. Class IV subfamily. In terms of tissue distribution, highly expressed in conidia.

The protein resides in the cell membrane. It carries out the reaction [(1-&gt;4)-N-acetyl-beta-D-glucosaminyl](n) + UDP-N-acetyl-alpha-D-glucosamine = [(1-&gt;4)-N-acetyl-beta-D-glucosaminyl](n+1) + UDP + H(+). In terms of biological role, polymerizes chitin, a structural polymer of the cell wall and septum, by transferring the sugar moiety of UDP-GlcNAc to the non-reducing end of the growing chitin polymer. Contributes to the production of conidia and the ability of fungal conidia to germinate. Involved in fungal stress tolerances. The protein is Chitin synthase IV of Metarhizium acridum (strain CQMa 102).